Consider the following 334-residue polypeptide: Nucleoid-associated protein YejK (334 aa).

The protein belongs to the YejK family.

It is found in the cytoplasm. The protein localises to the nucleoid. This Escherichia fergusonii (strain ATCC 35469 / DSM 13698 / CCUG 18766 / IAM 14443 / JCM 21226 / LMG 7866 / NBRC 102419 / NCTC 12128 / CDC 0568-73) protein is Nucleoid-associated protein YejK.